The sequence spans 518 residues: Filamentous growth regulator 15 (518 aa).

Over residues 1–41 the composition is skewed to polar residues; the sequence is MESTLSVSDEKLTNSSTALNNCGDNKESSQVLTTANTTTDN. 3 disordered regions span residues 1–63, 75–101, and 261–307; these read MEST…SKER, VDPN…DHGK, and KSRS…KQHR. A compositionally biased stretch (low complexity) spans 42–52; it reads QQVQPKSQHQQ. Positions 77 to 95 are enriched in polar residues; that stretch reads PNQQSKNTVSDSVQDTTGV. Basic residues predominate over residues 262-274; the sequence is SRSRSKVTKKRKV. A compositionally biased stretch (low complexity) spans 283-298; sequence SNTATATTSVTTPDAN. Residues 374–406 form a C2H2-type zinc finger; that stretch reads HECQLPSAEEPHKLCLRRFSRKYELIRHQETVH. The tract at residues 492-518 is disordered; the sequence is RKSSGDDTNYMETSDLESGEEEVTFNK. Over residues 505–518 the composition is skewed to acidic residues; that stretch reads SDLESGEEEVTFNK.

Its subcellular location is the nucleus. In terms of biological role, probable transcription factor involved in the regulation of filamentous growth. In Candida albicans (strain SC5314 / ATCC MYA-2876) (Yeast), this protein is Filamentous growth regulator 15 (FGR15).